A 289-amino-acid polypeptide reads, in one-letter code: Serine/threonine-protein phosphatase Pgam5, mitochondrial (289 aa).

A helical transmembrane segment spans residues Phe7–Leu23.

The protein belongs to the phosphoglycerate mutase family. BPG-dependent PGAM subfamily. Interacts with Pk92B/ASK1.

The protein localises to the mitochondrion outer membrane. It catalyses the reaction O-phospho-L-seryl-[protein] + H2O = L-seryl-[protein] + phosphate. The enzyme catalyses O-phospho-L-threonyl-[protein] + H2O = L-threonyl-[protein] + phosphate. Functionally, displays phosphatase activity for serine/threonine residues, and dephosphorylates and activates Pk92B kinase. Has apparently no phosphoglycerate mutase activity. The sequence is that of Serine/threonine-protein phosphatase Pgam5, mitochondrial from Drosophila virilis (Fruit fly).